Consider the following 197-residue polypeptide: Large ribosomal subunit protein bL25 (197 aa).

Belongs to the bacterial ribosomal protein bL25 family. CTC subfamily. In terms of assembly, part of the 50S ribosomal subunit; part of the 5S rRNA/L5/L18/L25 subcomplex. Contacts the 5S rRNA. Binds to the 5S rRNA independently of L5 and L18.

Functionally, this is one of the proteins that binds to the 5S RNA in the ribosome where it forms part of the central protuberance. The sequence is that of Large ribosomal subunit protein bL25 from Streptomyces avermitilis (strain ATCC 31267 / DSM 46492 / JCM 5070 / NBRC 14893 / NCIMB 12804 / NRRL 8165 / MA-4680).